Reading from the N-terminus, the 271-residue chain is MPELPEVEITRRGIDTHLAGRVITQISIRNPVLRWPISAGLIALLPGQRINAIARRAKYLLFACSRGTLIMHLGMSGNLRVLPESTPPQLHDHFDLQVDNGMMLRFRDPRRFGAILWWDGDIRQHPLLQKLGPEPLSDDFDGQFLYTKTRGRNASIKEVLMNQHIVVGIGNIYANEALFQAGISPLAAAGSLNTMQCERLVDAVKATLLRAIKAGGSSLRDFTDCEGSPGYFQQQYWVYGRAGQSCRQCGELVSKTRQGQRSTFFCARCQH.

The Schiff-base intermediate with DNA role is filled by P2. E3 acts as the Proton donor in catalysis. The active-site Proton donor; for beta-elimination activity is the K58. Residues H91, R110, and R152 each coordinate DNA. The FPG-type zinc finger occupies 237–271 (WVYGRAGQSCRQCGELVSKTRQGQRSTFFCARCQH). Residue R261 is the Proton donor; for delta-elimination activity of the active site.

The protein belongs to the FPG family. In terms of assembly, monomer. The cofactor is Zn(2+).

The enzyme catalyses Hydrolysis of DNA containing ring-opened 7-methylguanine residues, releasing 2,6-diamino-4-hydroxy-5-(N-methyl)formamidopyrimidine.. The catalysed reaction is 2'-deoxyribonucleotide-(2'-deoxyribose 5'-phosphate)-2'-deoxyribonucleotide-DNA = a 3'-end 2'-deoxyribonucleotide-(2,3-dehydro-2,3-deoxyribose 5'-phosphate)-DNA + a 5'-end 5'-phospho-2'-deoxyribonucleoside-DNA + H(+). In terms of biological role, involved in base excision repair of DNA damaged by oxidation or by mutagenic agents. Acts as a DNA glycosylase that recognizes and removes damaged bases. Has a preference for oxidized purines, such as 7,8-dihydro-8-oxoguanine (8-oxoG). Has AP (apurinic/apyrimidinic) lyase activity and introduces nicks in the DNA strand. Cleaves the DNA backbone by beta-delta elimination to generate a single-strand break at the site of the removed base with both 3'- and 5'-phosphates. This chain is Formamidopyrimidine-DNA glycosylase, found in Nitrosomonas europaea (strain ATCC 19718 / CIP 103999 / KCTC 2705 / NBRC 14298).